The primary structure comprises 554 residues: Guanine nucleotide-binding protein alpha-2 subunit (554 aa).

2 disordered regions span residues 1–139 (MGLC…NNSN) and 157–183 (VNGN…THSG). Gly2 carries the N-myristoyl glycine lipid modification. Cys4 is lipidated: S-palmitoyl cysteine. Composition is skewed to basic and acidic residues over residues 7-17 (KDSRESTHDGG) and 28-43 (ANRR…DKKQ). Positions 52-66 (GSIVNAASNINNSSS) are enriched in low complexity. Residues 67-85 (GKTKISTVSEDGTVSNGVG) show a composition bias toward polar residues. Residues 91 to 139 (DNANNKNNGNNNNSNNNDNNNNNNNNIGNNINGNNNNDSENIHDSNNSN) are compositionally biased toward low complexity. One can recognise a G-alpha domain in the interval 228–554 (NALKVLLLGS…ENSLKDSGVL (327 aa)). Positions 231–244 (KVLLLGSGESGKST) are G1 motif. GTP-binding residues include Glu239, Ser240, Gly241, Lys242, Ser243, Thr244, Asp351, Ile376, Thr382, Gly405, Asn471, Lys472, Asp474, and Ala526. Ser243 contributes to the Mg(2+) binding site. The segment at 374 to 382 (DVIRTRKKT) is G2 motif. Thr382 provides a ligand contact to Mg(2+). The G3 motif stretch occupies residues 398–407 (LHFFDVGGQR). The interval 467 to 474 (VLFLNKID) is G4 motif. The tract at residues 524–529 (TQATDT) is G5 motif.

This sequence belongs to the G-alpha family. G proteins are composed of 3 units; alpha, beta and gamma. The alpha chain contains the guanine nucleotide binding site. Mg(2+) is required as a cofactor.

Guanine nucleotide-binding proteins (G proteins) are involved as modulators or transducers in various transmembrane signaling systems. This protein may be involved in the determination of the cAMP level according to nutritional conditions, most probably as a regulator of adenylyl cyclase. The chain is Guanine nucleotide-binding protein alpha-2 subunit (GPA2) from Kluyveromyces lactis (strain ATCC 8585 / CBS 2359 / DSM 70799 / NBRC 1267 / NRRL Y-1140 / WM37) (Yeast).